A 460-amino-acid chain; its full sequence is GTPase Der (460 aa).

EngA-type G domains follow at residues 2 to 166 and 175 to 353; these read KTIA…AEER and TRIA…QERK. GTP-binding positions include 8–15, 55–59, 118–121, 181–188, 228–232, and 293–296; these read GRPNVGKS, DTGGL, NKLD, GQPNAGKS, DTAGL, and NKID. Residues 354-446 form the KH-like domain; it reads KRIPTHRLTQ…LLWKWRKAEG (93 aa).

Belongs to the TRAFAC class TrmE-Era-EngA-EngB-Septin-like GTPase superfamily. EngA (Der) GTPase family. Associates with the 50S ribosomal subunit.

Its function is as follows. GTPase that plays an essential role in the late steps of ribosome biogenesis. The protein is GTPase Der of Methylacidiphilum infernorum (isolate V4) (Methylokorus infernorum (strain V4)).